Consider the following 100-residue polypeptide: Small ribosomal subunit protein uS14c (100 aa).

The protein belongs to the universal ribosomal protein uS14 family. Part of the 30S ribosomal subunit.

The protein resides in the plastid. It is found in the chloroplast. Binds 16S rRNA, required for the assembly of 30S particles. The sequence is that of Small ribosomal subunit protein uS14c from Guillardia theta (Cryptophyte).